Reading from the N-terminus, the 336-residue chain is Acetaldehyde dehydrogenase 1 (336 aa).

NAD(+) is bound at residue 32–35 (SGVV). The active-site Acyl-thioester intermediate is the C150. N309 contributes to the NAD(+) binding site.

The protein belongs to the acetaldehyde dehydrogenase family.

It catalyses the reaction acetaldehyde + NAD(+) + CoA = acetyl-CoA + NADH + H(+). This is Acetaldehyde dehydrogenase 1 (mhpF) from Mycobacterium ulcerans (strain Agy99).